Reading from the N-terminus, the 246-residue chain is tRNA (guanine-N(1)-)-methyltransferase (246 aa).

Residues Gly114 and 134 to 139 (IGDYIL) each bind S-adenosyl-L-methionine.

Belongs to the RNA methyltransferase TrmD family. In terms of assembly, homodimer.

It is found in the cytoplasm. The catalysed reaction is guanosine(37) in tRNA + S-adenosyl-L-methionine = N(1)-methylguanosine(37) in tRNA + S-adenosyl-L-homocysteine + H(+). Functionally, specifically methylates guanosine-37 in various tRNAs. This Coxiella burnetii (strain CbuG_Q212) (Coxiella burnetii (strain Q212)) protein is tRNA (guanine-N(1)-)-methyltransferase.